A 566-amino-acid polypeptide reads, in one-letter code: Arginine--tRNA ligase (566 aa).

The 'HIGH' region motif lies at 121–131 (ANPNGPFHIGH).

The protein belongs to the class-I aminoacyl-tRNA synthetase family.

Its subcellular location is the cytoplasm. The catalysed reaction is tRNA(Arg) + L-arginine + ATP = L-arginyl-tRNA(Arg) + AMP + diphosphate. The chain is Arginine--tRNA ligase from Methanococcus maripaludis (strain C6 / ATCC BAA-1332).